Reading from the N-terminus, the 476-residue chain is Aspartyl/glutamyl-tRNA(Asn/Gln) amidotransferase subunit B (476 aa).

It belongs to the GatB/GatE family. GatB subfamily. Heterotrimer of A, B and C subunits.

It catalyses the reaction L-glutamyl-tRNA(Gln) + L-glutamine + ATP + H2O = L-glutaminyl-tRNA(Gln) + L-glutamate + ADP + phosphate + H(+). It carries out the reaction L-aspartyl-tRNA(Asn) + L-glutamine + ATP + H2O = L-asparaginyl-tRNA(Asn) + L-glutamate + ADP + phosphate + 2 H(+). In terms of biological role, allows the formation of correctly charged Asn-tRNA(Asn) or Gln-tRNA(Gln) through the transamidation of misacylated Asp-tRNA(Asn) or Glu-tRNA(Gln) in organisms which lack either or both of asparaginyl-tRNA or glutaminyl-tRNA synthetases. The reaction takes place in the presence of glutamine and ATP through an activated phospho-Asp-tRNA(Asn) or phospho-Glu-tRNA(Gln). This chain is Aspartyl/glutamyl-tRNA(Asn/Gln) amidotransferase subunit B, found in Neisseria gonorrhoeae (strain ATCC 700825 / FA 1090).